The primary structure comprises 456 residues: Proline--tRNA ligase (456 aa).

Belongs to the class-II aminoacyl-tRNA synthetase family. ProS type 3 subfamily. Homodimer.

The protein resides in the cytoplasm. It catalyses the reaction tRNA(Pro) + L-proline + ATP = L-prolyl-tRNA(Pro) + AMP + diphosphate. Catalyzes the attachment of proline to tRNA(Pro) in a two-step reaction: proline is first activated by ATP to form Pro-AMP and then transferred to the acceptor end of tRNA(Pro). This chain is Proline--tRNA ligase, found in Methanococcus aeolicus (strain ATCC BAA-1280 / DSM 17508 / OCM 812 / Nankai-3).